The following is a 230-amino-acid chain: UPF0758 protein Daud_1467 (230 aa).

The MPN domain maps to 108–230 (TVRTPEEAAG…FTSLKLEGLF (123 aa)). The Zn(2+) site is built by histidine 179, histidine 181, and aspartate 192. Positions 179–192 (HNHPSGDPAPSPQD) match the JAMM motif motif.

Belongs to the UPF0758 family.

This chain is UPF0758 protein Daud_1467, found in Desulforudis audaxviator (strain MP104C).